The sequence spans 601 residues: Glutathione-regulated potassium-efflux system protein KefB (601 aa).

13 helical membrane passes run 4–24 (SDFLLAGVLFLFAAVAAVPLA), 29–49 (IGAVLGYLLAGIAIGPWGLGF), 55–75 (EILHFSELGVVFLMFIIGLEL), 87–107 (IFGVGAAQVLLSSALLAGLLM), 115–135 (AAVVGGIGLAMSSTAMALQLM), 152–172 (VLLFQDLAVIPALALVPLLAG), 177–197 (HFDWMKIGMKVLAFVGMLIGG), 207–227 (FIAASGVREVFTAATLLLVLG), 230–250 (LFMDALGLSMALGTFIAGVLL), 268–288 (GLLLGLFFISVGMSLNLGVLY), 291–311 (LLWVVISVVVLVAVKILVLYL), 324–344 (MQFAGVLSQGGEFAFVLFSTA), and 356–376 (ALLLVTVTLSMMTTPLLMKLV). The RCK N-terminal domain occupies 400-519 (KPQVIVVGFG…AGVTQFSRET (120 aa)).

The protein belongs to the monovalent cation:proton antiporter 2 (CPA2) transporter (TC 2.A.37) family. KefB subfamily. As to quaternary structure, interacts with the regulatory subunit KefG.

Its subcellular location is the cell inner membrane. Pore-forming subunit of a potassium efflux system that confers protection against electrophiles. Catalyzes K(+)/H(+) antiport. This is Glutathione-regulated potassium-efflux system protein KefB from Escherichia coli O81 (strain ED1a).